Consider the following 299-residue polypeptide: Ubiquinol-cytochrome c reductase complex assembly factor 1 (299 aa).

Belongs to the CBP3 family. In terms of assembly, interacts with UQCC2. Interacts with UQCC3. Forms a complex, named COMB/coordinator of mitochondrial CYTB biogenesis, composed of UQCC1, UQCC2, UQCC4, UQCC5 and UQCC6; stabilizes nascent cytochrome b/MT-CYB and promotes its membrane insertion. Forms a complex, named COMB/coordinator of mitochondrial CYTB biogenesis, composed of UQCC1, UQCC2, UQCC4, UQCC5 and UQCC6; stabilizes nascent cytochrome b/MT-CYB and promotes its membrane insertion. Forms a complex, named COMA, composed of UQCC1, UQCC2 and UQCC4; activates MT-CYB translation. Forms a complex, named COMC, composed of UQCC1, UQCC2; UQCC3 and UQCC4; mediates MT-CYB hemylation and association with the first nuclear-encoded CIII subunit UQCRQ.

The protein resides in the mitochondrion inner membrane. It localises to the cytoplasmic vesicle. Functionally, required for the assembly of the ubiquinol-cytochrome c reductase complex (mitochondrial respiratory chain complex III or cytochrome b-c1 complex). Involved in cytochrome b translation and/or stability. The chain is Ubiquinol-cytochrome c reductase complex assembly factor 1 (UQCC1) from Homo sapiens (Human).